Consider the following 342-residue polypeptide: S-adenosylmethionine:tRNA ribosyltransferase-isomerase (342 aa).

Belongs to the QueA family. As to quaternary structure, monomer.

It is found in the cytoplasm. The catalysed reaction is 7-aminomethyl-7-carbaguanosine(34) in tRNA + S-adenosyl-L-methionine = epoxyqueuosine(34) in tRNA + adenine + L-methionine + 2 H(+). It functions in the pathway tRNA modification; tRNA-queuosine biosynthesis. In terms of biological role, transfers and isomerizes the ribose moiety from AdoMet to the 7-aminomethyl group of 7-deazaguanine (preQ1-tRNA) to give epoxyqueuosine (oQ-tRNA). The sequence is that of S-adenosylmethionine:tRNA ribosyltransferase-isomerase from Zymomonas mobilis subsp. mobilis (strain ATCC 31821 / ZM4 / CP4).